Here is a 112-residue protein sequence, read N- to C-terminus: Large ribosomal subunit protein bL17 (112 aa).

The protein belongs to the bacterial ribosomal protein bL17 family. Part of the 50S ribosomal subunit. Contacts protein L32.

The protein is Large ribosomal subunit protein bL17 of Caldanaerobacter subterraneus subsp. tengcongensis (strain DSM 15242 / JCM 11007 / NBRC 100824 / MB4) (Thermoanaerobacter tengcongensis).